We begin with the raw amino-acid sequence, 207 residues long: Small ribosomal subunit protein uS4 (207 aa).

The tract at residues 26–47 (AINNKNYKPGQQGNSSSISKPS) is disordered. The span at 28–39 (NNKNYKPGQQGN) shows a compositional bias: polar residues. One can recognise an S4 RNA-binding domain in the interval 95–158 (RRLDAVVYRL…KQIPIVIGAI (64 aa)).

This sequence belongs to the universal ribosomal protein uS4 family. Part of the 30S ribosomal subunit. Contacts protein S5. The interaction surface between S4 and S5 is involved in control of translational fidelity.

Its function is as follows. One of the primary rRNA binding proteins, it binds directly to 16S rRNA where it nucleates assembly of the body of the 30S subunit. In terms of biological role, with S5 and S12 plays an important role in translational accuracy. The protein is Small ribosomal subunit protein uS4 of Orientia tsutsugamushi (strain Boryong) (Rickettsia tsutsugamushi).